A 60-amino-acid polypeptide reads, in one-letter code: Mastoparan-VB2 (60 aa).

The N-terminal stretch at 1–27 is a signal peptide; the sequence is MKNTILLLFTAFIFLMGFFGMSADALA. AXPX repeat units follow at residues 27–30, 31–34, 35–38, and 41–44; these read ADPK, ADPL, AGPF, and ADPD. The propeptide occupies 28–45; that stretch reads DPKADPLAGPFPDADPDP. The residue at position 59 (leucine 59) is a Leucine amide.

It belongs to the MCD family. Mastoparan subfamily. In terms of tissue distribution, expressed by the venom gland.

It localises to the secreted. The protein resides in the target cell membrane. In terms of biological role, antimicrobial peptide. Shows activity against both Gram-positive and -negative bacteria, as well against fungi. Also promotes moderate mast cell degranulation. Does not show hemolytic activity on rabbit and human erythrocytes. Its mast cell degranulation activity may be related to the activation of G-protein coupled receptors in mast cells as well as interaction with other proteins located in cell endosomal membranes in the mast cells. This Vespa bicolor (Black shield wasp) protein is Mastoparan-VB2.